The following is a 751-amino-acid chain: Polyribonucleotide nucleotidyltransferase (751 aa).

The Mg(2+) site is built by Asp528 and Asp534. In terms of domain architecture, KH spans 594–653 (PRVISVTVPVSKIGEVIGPKGKMINQIQEDTGTDISIEDDGTVYIGATDGPSAEAARSAI). Residues 665–737 (GERYLGTVVK…DRGKLSLAPV (73 aa)) form the S1 motif domain.

The protein belongs to the polyribonucleotide nucleotidyltransferase family. Mg(2+) is required as a cofactor.

It localises to the cytoplasm. The catalysed reaction is RNA(n+1) + phosphate = RNA(n) + a ribonucleoside 5'-diphosphate. In terms of biological role, involved in mRNA degradation. Catalyzes the phosphorolysis of single-stranded polyribonucleotides processively in the 3'- to 5'-direction. The chain is Polyribonucleotide nucleotidyltransferase from Kocuria rhizophila (strain ATCC 9341 / DSM 348 / NBRC 103217 / DC2201).